The sequence spans 361 residues: Chorismate synthase (361 aa).

2 residues coordinate NADP(+): Arg-48 and Arg-54. Residues 125-127 (RSS), 238-239 (NA), Gly-278, 293-297 (KPTSS), and Arg-319 contribute to the FMN site.

It belongs to the chorismate synthase family. As to quaternary structure, homotetramer. FMNH2 is required as a cofactor.

The catalysed reaction is 5-O-(1-carboxyvinyl)-3-phosphoshikimate = chorismate + phosphate. It participates in metabolic intermediate biosynthesis; chorismate biosynthesis; chorismate from D-erythrose 4-phosphate and phosphoenolpyruvate: step 7/7. Its function is as follows. Catalyzes the anti-1,4-elimination of the C-3 phosphate and the C-6 proR hydrogen from 5-enolpyruvylshikimate-3-phosphate (EPSP) to yield chorismate, which is the branch point compound that serves as the starting substrate for the three terminal pathways of aromatic amino acid biosynthesis. This reaction introduces a second double bond into the aromatic ring system. In Pectobacterium carotovorum subsp. carotovorum (strain PC1), this protein is Chorismate synthase.